Here is a 562-residue protein sequence, read N- to C-terminus: MNVFGKKEEKQEKVYSLQNGFPYSHHPYASQYSRPDGPILLQDFHLLENIASFDRERVPERVVHAKGGGCRLEFELTDSLSDITYAAPYQNVGYKCPGLVRFSTVGGESGTPDTARDPRGVSFKFYTEWGNHDWVFNNTPVFFLRDAIKFPVFIHSQKRDPQSHLNQFQDTTIYWDYLTLNPESIHQITYMFGDRGTPASWASMNAYSGHSFIMVNKEGKDTYVQFHVLSDTGFETLTGDKAAELSGSHPDYNQAKLFTQLQNGEKPKFNCYVQTMTPEQATKFRYSVNDLTKIWPHKEFPLRKFGTITLTENVDNYFQEIEQVAFSPTNTCIPGIKPSNDSVLQARLFSYPDTQRHRLGANYQQLPVNRPRNLGCPYSKGDSQYTAEQCPFKAVNFQRDGPMSYYNFGPEPNYISSLPNQTLKFKNEDNDEVSDKFKGIVLDEVTEVSVRKQEQDQIRNEHIVDAKINQYYYVYGISPLDFEQPRALYEKVYNDEQKKLFVHNVVCHACKIKDPKVKKRVTQYFGLLNEDLGKVIAECLGVPWEPVDLEGYAKTWSIASAN.

Residues His-64 and Asn-137 contribute to the active site. Position 351 (Tyr-351) interacts with heme.

The protein belongs to the catalase family. In terms of assembly, homotetramer. Heme is required as a cofactor.

The protein localises to the cytoplasm. It carries out the reaction 2 H2O2 = O2 + 2 H2O. Functionally, occurs in almost all aerobically respiring organisms and serves to protect cells from the toxic effects of hydrogen peroxide. This chain is Catalase T (CTT1), found in Saccharomyces cerevisiae (strain ATCC 204508 / S288c) (Baker's yeast).